Reading from the N-terminus, the 178-residue chain is Large ribosomal subunit protein uL6 (178 aa).

It belongs to the universal ribosomal protein uL6 family. As to quaternary structure, part of the 50S ribosomal subunit.

This protein binds to the 23S rRNA, and is important in its secondary structure. It is located near the subunit interface in the base of the L7/L12 stalk, and near the tRNA binding site of the peptidyltransferase center. This Campylobacter lari (strain RM2100 / D67 / ATCC BAA-1060) protein is Large ribosomal subunit protein uL6.